The chain runs to 77 residues: Large ribosomal subunit protein uL24 (77 aa).

The disordered stretch occupies residues 42–61 (KKHQKPSQTNANGGVVESEG).

It belongs to the universal ribosomal protein uL24 family. As to quaternary structure, part of the 50S ribosomal subunit.

Functionally, one of two assembly initiator proteins, it binds directly to the 5'-end of the 23S rRNA, where it nucleates assembly of the 50S subunit. Its function is as follows. One of the proteins that surrounds the polypeptide exit tunnel on the outside of the subunit. This is Large ribosomal subunit protein uL24 from Lactobacillus acidophilus (strain ATCC 700396 / NCK56 / N2 / NCFM).